Consider the following 352-residue polypeptide: Protein NDRG4 (352 aa).

Phosphoserine is present on residues serine 298, serine 317, and serine 323. The segment at 301-352 (AVPSASMTRLARSRTASLTSASSVDGSRPQPCTHSDSSEGMGQVNHTMEVSC) is disordered. Over residues 308–323 (TRLARSRTASLTSASS) the composition is skewed to low complexity. The span at 330–352 (QPCTHSDSSEGMGQVNHTMEVSC) shows a compositional bias: polar residues.

Belongs to the NDRG family. In terms of tissue distribution, expressed in the brain and heart, weakly in the kidney; most prominently in postnatal brain where it is expressed widely in the olfactory bulb, cerebral cortex, hippocampus, cerebellum, thalamus, and medulla oblongata.

The protein localises to the cytoplasm. Its subcellular location is the cytosol. Its function is as follows. Contributes to the maintenance of intracerebral BDNF levels within the normal range, which is necessary for the preservation of spatial learning and the resistance to neuronal cell death caused by ischemic stress. May enhance growth factor-induced ERK1 and ERK2 phosphorylation, including that induced by NGF. May attenuate NGF-promoted ELK1 phosphorylation in a microtubule-dependent manner. In Rattus norvegicus (Rat), this protein is Protein NDRG4 (Ndrg4).